The primary structure comprises 207 residues: Peptidyl-tRNA hydrolase (207 aa).

Tyr-17 contacts tRNA. Residue His-22 is the Proton acceptor of the active site. TRNA is bound by residues Phe-68, Asn-70, and Asn-116.

It belongs to the PTH family. Monomer.

The protein resides in the cytoplasm. It carries out the reaction an N-acyl-L-alpha-aminoacyl-tRNA + H2O = an N-acyl-L-amino acid + a tRNA + H(+). Its function is as follows. Hydrolyzes ribosome-free peptidyl-tRNAs (with 1 or more amino acids incorporated), which drop off the ribosome during protein synthesis, or as a result of ribosome stalling. In terms of biological role, catalyzes the release of premature peptidyl moieties from peptidyl-tRNA molecules trapped in stalled 50S ribosomal subunits, and thus maintains levels of free tRNAs and 50S ribosomes. This Buchnera aphidicola subsp. Baizongia pistaciae (strain Bp) protein is Peptidyl-tRNA hydrolase.